A 325-amino-acid chain; its full sequence is 33 kDa chaperonin (325 aa).

Disulfide bonds link C260–C262 and C293–C296.

The protein belongs to the HSP33 family. Post-translationally, under oxidizing conditions two disulfide bonds are formed involving the reactive cysteines. Under reducing conditions zinc is bound to the reactive cysteines and the protein is inactive.

It localises to the cytoplasm. In terms of biological role, redox regulated molecular chaperone. Protects both thermally unfolding and oxidatively damaged proteins from irreversible aggregation. Plays an important role in the bacterial defense system toward oxidative stress. In Aquifex aeolicus (strain VF5), this protein is 33 kDa chaperonin.